A 518-amino-acid chain; its full sequence is Calcium/calmodulin-dependent protein kinase kinase cmkC (518 aa).

The disordered stretch occupies residues M1–G72. 2 stretches are compositionally biased toward polar residues: residues S8–S17 and N60–D71. The 296-residue stretch at Y81–V376 folds into the Protein kinase domain. ATP is bound by residues I87 to V95 and K109. Residues R119–T149 form a disordered region. The active-site Proton acceptor is the D243. The autoinhibitory domain stretch occupies residues F404–K409. Residues I407–T431 form a calmodulin-binding region. A disordered region spans residues P453–K472.

Belongs to the protein kinase superfamily. Ser/Thr protein kinase family.

It carries out the reaction L-seryl-[protein] + ATP = O-phospho-L-seryl-[protein] + ADP + H(+). The enzyme catalyses L-threonyl-[protein] + ATP = O-phospho-L-threonyl-[protein] + ADP + H(+). Its activity is regulated as follows. Activated by Ca(2+)/calmodulin. Binding of calmodulin may relieve intrasteric autoinhibition. Calcium/calmodulin-dependent protein kinase that operates in the calcium-triggered CaMKK-CaMK1 signaling cascade. Phosphorylates and activates cmkB in vitro. Required in G1-phase of the cell cycle for proper timing of the initial nuclear division after germination as well as for subsequent nuclear division cycles. Required for the normal temporal regulation of nimX activity. The chain is Calcium/calmodulin-dependent protein kinase kinase cmkC from Emericella nidulans (Aspergillus nidulans).